The primary structure comprises 256 residues: Nuclear shuttle protein (256 aa).

Positions 1 to 16 (MYSTSNRRGRSQTQRG) are enriched in polar residues. The disordered stretch occupies residues 1 to 46 (MYSTSNRRGRSQTQRGSHVRRTGVKRSYGAARGDDRRRPNVVSKTQ). A Bipartite nuclear localization signal motif is present at residues 21–42 (RTGVKRSYGAARGDDRRRPNVV). The Nuclear localization signal signature appears at 81–96 (SYVKTVPNRTRTYIKL). The interval 150–187 (ELFGARIHCHGNLSVVPALKDRYYIRHVTKRVVSLEKD) is interaction with Arabidopsis thaliana NSI protein. The Nuclear export signal motif lies at 177-198 (VTKRVVSLEKDTLLIDLHGTTQ).

It belongs to the begomovirus nuclear shuttle protein family. As to quaternary structure, binds to single-stranded and double-stranded viral DNA. Interacts with the host nuclear shuttle interacting (NSI) protein. This interaction may allow NSP to recruit NSI monomers to the viral genome and thus regulate nuclear export of viral genome by NSP.

Its subcellular location is the host nucleus. It is found in the host cytoplasm. The protein localises to the host cell membrane. Its function is as follows. Binds to the genomic viral ssDNA, shuttles it into and out of the cell nucleus. Begomoviruses use 2 proteins to transport their DNA from cell to cell. The nuclear shuttle protein (NSP) shuttles it between nucleus and cytoplasm and the movement protein (MP) probably transports the DNA-NSP complex to the cell periphery and facilitates movement across the cell wall. This chain is Nuclear shuttle protein, found in Squash leaf curl virus (SLCV).